Reading from the N-terminus, the 358-residue chain is UDP-N-acetylglucosamine--N-acetylmuramyl-(pentapeptide) pyrophosphoryl-undecaprenol N-acetylglucosamine transferase (358 aa).

UDP-N-acetyl-alpha-D-glucosamine contacts are provided by residues 11 to 13, Asn124, Arg164, Ser195, and Gln291; that span reads TGG.

This sequence belongs to the glycosyltransferase 28 family. MurG subfamily.

The protein localises to the cell inner membrane. The catalysed reaction is di-trans,octa-cis-undecaprenyl diphospho-N-acetyl-alpha-D-muramoyl-L-alanyl-D-glutamyl-meso-2,6-diaminopimeloyl-D-alanyl-D-alanine + UDP-N-acetyl-alpha-D-glucosamine = di-trans,octa-cis-undecaprenyl diphospho-[N-acetyl-alpha-D-glucosaminyl-(1-&gt;4)]-N-acetyl-alpha-D-muramoyl-L-alanyl-D-glutamyl-meso-2,6-diaminopimeloyl-D-alanyl-D-alanine + UDP + H(+). It functions in the pathway cell wall biogenesis; peptidoglycan biosynthesis. In terms of biological role, cell wall formation. Catalyzes the transfer of a GlcNAc subunit on undecaprenyl-pyrophosphoryl-MurNAc-pentapeptide (lipid intermediate I) to form undecaprenyl-pyrophosphoryl-MurNAc-(pentapeptide)GlcNAc (lipid intermediate II). The polypeptide is UDP-N-acetylglucosamine--N-acetylmuramyl-(pentapeptide) pyrophosphoryl-undecaprenol N-acetylglucosamine transferase (Leptospira borgpetersenii serovar Hardjo-bovis (strain JB197)).